A 395-amino-acid chain; its full sequence is Acetate kinase (395 aa).

Asn-8 is a Mg(2+) binding site. Residue Lys-15 participates in ATP binding. Substrate is bound at residue Arg-90. Asp-147 (proton donor/acceptor) is an active-site residue. Residues His-207–Gly-211, Asp-284–Arg-286, and Gly-330–Asn-334 each bind ATP. Glu-383 is a Mg(2+) binding site.

Belongs to the acetokinase family. In terms of assembly, homodimer. Requires Mg(2+) as cofactor. It depends on Mn(2+) as a cofactor.

It is found in the cytoplasm. It carries out the reaction acetate + ATP = acetyl phosphate + ADP. It functions in the pathway metabolic intermediate biosynthesis; acetyl-CoA biosynthesis; acetyl-CoA from acetate: step 1/2. Its function is as follows. Catalyzes the formation of acetyl phosphate from acetate and ATP. Can also catalyze the reverse reaction. The sequence is that of Acetate kinase from Enterococcus faecalis (strain ATCC 700802 / V583).